A 129-amino-acid polypeptide reads, in one-letter code: Transcription antitermination protein NusB (129 aa).

The protein belongs to the NusB family.

Functionally, involved in transcription antitermination. Required for transcription of ribosomal RNA (rRNA) genes. Binds specifically to the boxA antiterminator sequence of the ribosomal RNA (rrn) operons. The polypeptide is Transcription antitermination protein NusB (Staphylococcus aureus (strain MRSA252)).